We begin with the raw amino-acid sequence, 71 residues long: Heat-stable enterotoxin A (71 aa).

The signal sequence occupies residues methionine 1–glycine 19. Positions glutamine 20 to valine 53 are excised as a propeptide. 3 disulfides stabilise this stretch: cysteine 59-cysteine 64, cysteine 60-cysteine 68, and cysteine 63-cysteine 71.

Belongs to the heat-stable enterotoxin family.

The protein resides in the secreted. Its function is as follows. Toxin which activates the particulate form of guanylate cyclase and increases cyclic GMP levels within the host intestinal epithelial cells. The sequence is that of Heat-stable enterotoxin A (ystA) from Yersinia enterocolitica.